The primary structure comprises 118 residues: Beta-defensin 126 (118 aa).

Residues Met-1–Gly-20 form the signal peptide. Positions Ser-21–Asp-63 are in vitro binds to LPS, mediates antimicrobial activity and inhibits LPS-mediated inflammation. Cystine bridges form between Cys-27–Cys-58, Cys-34–Cys-52, and Cys-38–Cys-59.

Belongs to the beta-defensin family. Homodimer or homooligomer; disulfide-linked. Post-translationally, O-glycosylated; glycans contain alpha(2,3)-linked sialic acids.

The protein localises to the secreted. Highly glycosylated atypical beta-defensin involved in several aspects of sperm function. Facilitates sperm transport in the female reproductive tract and contributes to sperm protection against immunodetection; both functions are probably implicating the negative surface charge provided by its O-linked oligosaccharides in the sperm glycocalyx. Involved in binding of sperm to oviductal epithelial cells to form a sperm reservoir until ovulation. Release from the sperm surface during capacitation and ovaluation by an elevation of oviductal fluid pH is unmasking other surface components and allows sperm to penetrate the cumulus matrix and bind to the zona pellucida of the oocyte. In vitro has antimicrobial activity and may inhibit LPS-mediated inflammation. The polypeptide is Beta-defensin 126 (DEFB126) (Pongo pygmaeus (Bornean orangutan)).